A 420-amino-acid chain; its full sequence is Carboxypeptidase A4 (420 aa).

A signal peptide spans 1 to 16 (MKWLLFFGALIGAGIC). Residues 17-113 (GRDKFFGDQV…EMQHNEGIER (97 aa)) constitute a propeptide, activation peptide. Residues Pro-69, Val-71, Asn-118, Tyr-122, His-123, Glu-126, and Phe-162 each contribute to the a protein site. A Peptidase M14 domain is found at 121–415 (AYHPLEAIYH…LGLKTIMEHV (295 aa)). Residues His-180 and Glu-183 each coordinate Zn(2+). An intrachain disulfide couples Cys-249 to Cys-272. An N-linked (GlcNAc...) asparagine glycan is attached at Asn-259. Residue His-307 participates in Zn(2+) binding. Catalysis depends on Glu-381, which acts as the Proton donor/acceptor.

This sequence belongs to the peptidase M14 family. Interacts with LXN. Zn(2+) serves as cofactor.

The protein resides in the secreted. In terms of biological role, metalloprotease that cleaves hydrophobic C-terminal residues with a preference for -Phe, -Leu, -Ile, -Met, -Tyr and -Val. May function in peptide hormone and/or neuropeptide catabolism. The sequence is that of Carboxypeptidase A4 (Cpa4) from Mus musculus (Mouse).